The sequence spans 376 residues: Erythronate-4-phosphate dehydrogenase (376 aa).

The substrate site is built by S45 and T67. D147 contacts NAD(+). R209 is an active-site residue. D233 serves as a coordination point for NAD(+). E238 is a catalytic residue. The active-site Proton donor is H255. G258 is a binding site for NAD(+). Y259 is a substrate binding site.

Belongs to the D-isomer specific 2-hydroxyacid dehydrogenase family. PdxB subfamily. As to quaternary structure, homodimer.

The protein resides in the cytoplasm. It carries out the reaction 4-phospho-D-erythronate + NAD(+) = (R)-3-hydroxy-2-oxo-4-phosphooxybutanoate + NADH + H(+). It functions in the pathway cofactor biosynthesis; pyridoxine 5'-phosphate biosynthesis; pyridoxine 5'-phosphate from D-erythrose 4-phosphate: step 2/5. Functionally, catalyzes the oxidation of erythronate-4-phosphate to 3-hydroxy-2-oxo-4-phosphonooxybutanoate. The protein is Erythronate-4-phosphate dehydrogenase of Shewanella sp. (strain W3-18-1).